The sequence spans 256 residues: Nuclear shuttle protein (256 aa).

The tract at residues 18–50 is disordered; it reads VSRNQSSKRGTFVRRTDGKRRKGPSSKAHDEPK. The Bipartite nuclear localization signal motif lies at 21–42; sequence NQSSKRGTFVRRTDGKRRKGPS. The Nuclear localization signal signature appears at 81–96; it reads VLGKIEPNRSRSYIKL. The tract at residues 150 to 187 is interaction with Arabidopsis thaliana NSI protein; the sequence is EIFGARIHSHGNLAITPGLKDRYYVLHVLKRVLSVEKD.

This sequence belongs to the begomovirus nuclear shuttle protein family. In terms of assembly, binds to single-stranded and double-stranded viral DNA. Interacts with the host nuclear shuttle interacting (NSI) protein. This interaction may allow NSP to recruit NSI monomers to the viral genome and thus regulate nuclear export of viral genome by NSP.

It localises to the host nucleus. It is found in the host cytoplasm. Its subcellular location is the host cell membrane. Its function is as follows. Binds to the genomic viral ssDNA, shuttles it into and out of the cell nucleus. Begomoviruses use 2 proteins to transport their DNA from cell to cell. The nuclear shuttle protein (NSP) shuttles it between nucleus and cytoplasm and the movement protein (MP) probably transports the DNA-NSP complex to the cell periphery and facilitates movement across the cell wall. This chain is Nuclear shuttle protein, found in Brassica oleracea (Wild cabbage).